Consider the following 340-residue polypeptide: MTMSLIAGVAAFVLTVLAMPHFITYYKIKKIGGQQMHEDVKQHLAKAGTPTMGGTVFLVVAILISLIFNFHVFTEGHPAYGATAGILFVILIYGIIGFLDDFLKIFHQINEGLKPWQKMALQIVAGLLFYFIHVLPSGTNSLAIGGLTIQLGVFYVLFVLFWIVGFSNAVNLTDGIDGLASVSVVISLIAYGIIAFVKGELAILTIIITMIGALLGFFVFNHKPAKVFMGDVGSLSLGAMLAVISIALRVEWTLLLIGVVYVLETASVMLQVSYFKYTKRKYGEGRRIFRMTPFHHHLELGGISGKGEKWSEWKVDAFLWTIGALASSITLWMVLGNVMK.

The next 10 membrane-spanning stretches (helical) occupy residues 3–23 (MSLIAGVAAFVLTVLAMPHFI), 53–73 (GGTVFLVVAILISLIFNFHVF), 79–99 (AYGATAGILFVILIYGIIGFL), 119–139 (MALQIVAGLLFYFIHVLPSGT), 144–164 (IGGLTIQLGVFYVLFVLFWIV), 176–196 (IDGLASVSVVISLIAYGIIAF), 200–220 (ELAILTIIITMIGALLGFFVF), 227–247 (VFMGDVGSLSLGAMLAVISIA), 250–270 (VEWTLLLIGVVYVLETASVML), and 315–335 (VDAFLWTIGALASSITLWMVL).

This sequence belongs to the glycosyltransferase 4 family. MraY subfamily. Mg(2+) serves as cofactor.

It localises to the cell membrane. It catalyses the reaction UDP-N-acetyl-alpha-D-muramoyl-L-alanyl-gamma-D-glutamyl-L-lysyl-D-alanyl-D-alanine + di-trans,octa-cis-undecaprenyl phosphate = Mur2Ac(oyl-L-Ala-gamma-D-Glu-L-Lys-D-Ala-D-Ala)-di-trans,octa-cis-undecaprenyl diphosphate + UMP. Its pathway is cell wall biogenesis; peptidoglycan biosynthesis. Functionally, catalyzes the initial step of the lipid cycle reactions in the biosynthesis of the cell wall peptidoglycan: transfers peptidoglycan precursor phospho-MurNAc-pentapeptide from UDP-MurNAc-pentapeptide onto the lipid carrier undecaprenyl phosphate, yielding undecaprenyl-pyrophosphoryl-MurNAc-pentapeptide, known as lipid I. In Streptococcus thermophilus (strain ATCC BAA-250 / LMG 18311), this protein is Phospho-N-acetylmuramoyl-pentapeptide-transferase.